Here is a 312-residue protein sequence, read N- to C-terminus: MDILFYHPTFDTTWWINALREALPEAKVREWKCGDHDPADYALVWHPPVEMLAGRTLKAVFALGAGVDSILSKLQAHPEMLAPSVPLFRLEDTGMGEQMQEYAVSQVLHWFRRFDDYQALKNESRWEPLPEYRKEDFSIGIMGAGVLGSKVAESLKVWGFPLRCWSRSRKSWPGVESFAGKEELGAFLRKTRVLINLLPNTPETVGIINLHLLNQLQDNAYLLNLARGVHVVEDDLLIALNNGKLKGAMLDVFSREPLPAESPLWKHPRVAMTPHVAAVTRPAEAVAYISKTINRLEKGEPVTGQVDRIRGY.

R227 is a catalytic residue. The Proton donor role is filled by H275.

The protein belongs to the D-isomer specific 2-hydroxyacid dehydrogenase family. GhrA subfamily.

Its subcellular location is the cytoplasm. It carries out the reaction glycolate + NADP(+) = glyoxylate + NADPH + H(+). It catalyses the reaction (R)-glycerate + NAD(+) = 3-hydroxypyruvate + NADH + H(+). The catalysed reaction is (R)-glycerate + NADP(+) = 3-hydroxypyruvate + NADPH + H(+). Functionally, catalyzes the NADPH-dependent reduction of glyoxylate and hydroxypyruvate into glycolate and glycerate, respectively. The chain is Glyoxylate/hydroxypyruvate reductase A from Escherichia fergusonii (strain ATCC 35469 / DSM 13698 / CCUG 18766 / IAM 14443 / JCM 21226 / LMG 7866 / NBRC 102419 / NCTC 12128 / CDC 0568-73).